Consider the following 407-residue polypeptide: Vancomycin aglycone glucosyltransferase (407 aa).

The protein belongs to the glycosyltransferase 28 family.

It carries out the reaction vancomycin aglycone + UDP-alpha-D-glucose = devancoaminyl-vancomycin + UDP. It functions in the pathway antibiotic biosynthesis; vancomycin biosynthesis. Functionally, glucosyltransferase that transfers glucose to the 4-OH-Phegly(4) residue of vancomycin aglycone (AGV) to produce devancoaminyl-vancomycin (DVV) in the biosynthesis of glycopeptide antibiotic chloroeremomycin, a member of the vancomycin group of antibiotics. In Amycolatopsis orientalis (Nocardia orientalis), this protein is Vancomycin aglycone glucosyltransferase (gtfB).